Reading from the N-terminus, the 176-residue chain is Large ribosomal subunit protein uL6 (176 aa).

Over residues 151–169 (RPPEPYKGRGIKYTDEHIQ) the composition is skewed to basic and acidic residues. The interval 151–176 (RPPEPYKGRGIKYTDEHIQRKAGKTK) is disordered.

This sequence belongs to the universal ribosomal protein uL6 family. As to quaternary structure, part of the 50S ribosomal subunit.

Its function is as follows. This protein binds to the 23S rRNA, and is important in its secondary structure. It is located near the subunit interface in the base of the L7/L12 stalk, and near the tRNA binding site of the peptidyltransferase center. This is Large ribosomal subunit protein uL6 from Desulfosudis oleivorans (strain DSM 6200 / JCM 39069 / Hxd3) (Desulfococcus oleovorans).